The sequence spans 152 residues: Deoxyuridine 5'-triphosphate nucleotidohydrolase (152 aa).

Residues 71 to 73 (RSG), asparagine 84, 88 to 90 (LID), and methionine 98 contribute to the substrate site.

It belongs to the dUTPase family. It depends on Mg(2+) as a cofactor.

The enzyme catalyses dUTP + H2O = dUMP + diphosphate + H(+). It participates in pyrimidine metabolism; dUMP biosynthesis; dUMP from dCTP (dUTP route): step 2/2. Its function is as follows. This enzyme is involved in nucleotide metabolism: it produces dUMP, the immediate precursor of thymidine nucleotides and it decreases the intracellular concentration of dUTP so that uracil cannot be incorporated into DNA. The protein is Deoxyuridine 5'-triphosphate nucleotidohydrolase of Enterobacter sp. (strain 638).